The chain runs to 617 residues: MKLKISLIAPILLLFSFFFAVESKCRTSCPLALASYYLENGTTLSVINQNLNSSIAPYDQINFDPILRYNSNIKDKDRIQMGSRVLVPFPCECQPGDFLGHNFSYSVRQEDTYERVAISNYANLTTMESLQARNPFPATNIPLSATLNVLVNCSCGDESVSKDFGLFVTYPLRPEDSLSSIARSSGVSADILQRYNPGVNFNSGNGIVYVPGRDPNGAFPPFKSSKQDGVGAGVIAGIVIGVIVALLLILFIVYYAYRKNKSKGDSFSSSIPLSTKADHASSTSLQSGGLGGAGVSPGIAAISVDKSVEFSLEELAKATDNFNLSFKIGQGGFGAVYYAELRGEKAAIKKMDMEASKQFLAELKVLTRVHHVNLVRLIGYCVEGSLFLVYEYVENGNLGQHLHGSGREPLPWTKRVQIALDSARGLEYIHEHTVPVYVHRDIKSANILIDQKFRAKVADFGLTKLTEVGGSATRGAMGTFGYMAPETVYGEVSAKVDVYAFGVVLYELISAKGAVVKMTEAVGEFRGLVGVFEESFKETDKEEALRKIIDPRLGDSYPFDSVYKMAELGKACTQENAQLRPSMRYIVVALSTLFSSTGNWDVGNFQNEDLVSLMSGR.

The first 23 residues, 1-23 (MKLKISLIAPILLLFSFFFAVES), serve as a signal peptide directing secretion. At 24–232 (KCRTSCPLAL…KSSKQDGVGA (209 aa)) the chain is on the extracellular side. Cystine bridges form between Cys25–Cys93, Cys29–Cys155, and Cys91–Cys153. N-linked (GlcNAc...) asparagine glycans are attached at residues Asn40, Asn52, and Asn102. The LysM 1; degenerate domain occupies 46–74 (VINQNLNSSIAPYDQINFDPILRYNSNIK). The 33-residue stretch at 108–140 (RQEDTYERVAISNYANLTTMESLQARNPFPATN) folds into the LysM 2; degenerate domain. A chitin-binding site is contributed by 109 to 115 (QEDTYER). Asn123 is a glycosylation site (N-linked (GlcNAc...) asparagine). Position 137-143 (137-143 (PATNIPL)) interacts with chitin. Asn152 carries N-linked (GlcNAc...) asparagine glycosylation. In terms of domain architecture, LysM 3 spans 168 to 211 (VTYPLRPEDSLSSIARSSGVSADILQRYNPGVNFNSGNGIVYVP). Residues 233–253 (GVIAGIVIGVIVALLLILFIV) form a helical membrane-spanning segment. Residues 254–617 (YYAYRKNKSK…EDLVSLMSGR (364 aa)) lie on the Cytoplasmic side of the membrane. Phosphoserine occurs at positions 266, 268, and 274. The region spanning 322 to 594 (FNLSFKIGQG…YIVVALSTLF (273 aa)) is the Protein kinase domain. ATP contacts are provided by residues 328–336 (IGQGGFGAV) and Lys349. Tyr390 bears the Phosphotyrosine mark. Asp441 functions as the Proton acceptor in the catalytic mechanism. 2 positions are modified to phosphothreonine: Thr479 and Thr519.

This sequence belongs to the protein kinase superfamily. Ser/Thr protein kinase family. As to quaternary structure, forms homodimers and homooligomers. Homodimerization is required to trigger plant defenses. Binds to chitin, chitosan and chito-oligomer oligosaccharide elicitors. Interaction with chitin octamer (NAG(8)) promotes homodimerization while shorter chitin oligomers inhibit homodimerization. Interacts with Pseudomonas syringae hopAB2/avrPtoB. Interacts (preferentially when unphosphorylated) with PBL27 at the plasma membrane. Binds to IOS1. Autophosphorylated. Autophosphorylation is induced by chitin and derivatives. In terms of processing, ubiquitinated and targeted to the proteasome by hopAB2/avrPtoB of Pseudomonas syringae pv. tomato DC3000. As to expression, expressed ubiquitously, with lowest expression in pollen.

The protein localises to the cell membrane. It carries out the reaction L-seryl-[protein] + ATP = O-phospho-L-seryl-[protein] + ADP + H(+). The catalysed reaction is L-threonyl-[protein] + ATP = O-phospho-L-threonyl-[protein] + ADP + H(+). Activated by chitin-mediated homodimerization. Functionally, lysin motif (LysM) receptor kinase that functions as a cell surface receptor in chitin elicitor (chitooligosaccharides) signaling leading to innate immunity toward both biotic and abiotic stresses (e.g. tolerance to salinity, heavy-metal stresses, and Botrytis cinerea infection). Recognizes microbe-derived N-acetylglucosamine (NAG)-containing ligands. Involved in the resistance to pathogenic fungi Alternaria brassicicola and Erysiphe cichoracearum, probably by sensing microbe-associated molecular patterns (MAMP) and pathogen-associated molecular patterns (PAMP). Plays an essential role in detecting peptidoglycans (e.g. PGNs) and restricting bacterial growth. Target of the bacterial type III effector E3-ligase protein hopAB2/avrPtoB of Pseudomonas syringae pv. tomato DC3000 that mediates ubiquitination and subsequent proteolysis, thus blocking all defense responses by suppressing PAMP-triggered immunity (PTI). Mediates chitin-induced phosphorylation of PBL27. The polypeptide is Chitin elicitor receptor kinase 1 (CERK1) (Arabidopsis thaliana (Mouse-ear cress)).